A 562-amino-acid polypeptide reads, in one-letter code: Glucocorticoid modulatory element-binding protein 1 (562 aa).

Ala2 bears the N-acetylalanine mark. The SAND domain maps to 72–156 (ASSIEGNEDM…RKMMDSGQID (85 aa)). Cys103 is a binding site for Zn(2+). The DNA site is built by Lys129, Lys133, Lys136, and Arg147. Positions 160, 164, and 168 each coordinate Zn(2+). Residues 311-355 (LDNRRKQVEQGEEQFLYTLADLERQLEEQKKQAQDPRLKSQTVQN) adopt a coiled-coil conformation. The segment at 360–384 (PVSTPKPPKRPRLQRPASTTVLSPS) is disordered. Positions 375-384 (PASTTVLSPS) are enriched in polar residues.

Homodimer, and heterodimer of GMEB1 and GMEB2. Interacts with TRIM63. Interacts with the glucocorticoid receptor (NR3C1) and NCOA2/TIF2. May interact with HSP27 and CREB-binding protein (CBP). Ubiquitous. Low levels were detected in heart, brain, spleen, lung, liver, skeletal muscle, kidney and testis.

It localises to the nucleus. The protein resides in the cytoplasm. In terms of biological role, trans-acting factor that binds to glucocorticoid modulatory elements (GME) present in the TAT (tyrosine aminotransferase) promoter and increases sensitivity to low concentrations of glucocorticoids. Also binds to the transferrin receptor promoter. The protein is Glucocorticoid modulatory element-binding protein 1 (Gmeb1) of Mus musculus (Mouse).